A 990-amino-acid polypeptide reads, in one-letter code: Translation initiation factor IF-2 (990 aa).

A disordered region spans residues 92–402 (KKRTFVKRDD…QRDEHLQAAP (311 aa)). 2 stretches are compositionally biased toward low complexity: residues 104-116 (EGAA…AAFA) and 131-151 (EAPA…AAPA). The segment covering 158-201 (ELARREEQARHQAELIRRQEAELAAKRAAREAREKREREAEERA) has biased composition (basic and acidic residues). Residues 223-243 (TREQAAEATARNAAQLQARAK) show a composition bias toward low complexity. Residues 244-264 (AAAESKARSDEEAARAADLDA) are compositionally biased toward basic and acidic residues. Composition is skewed to low complexity over residues 281-290 (ATPKKAVMVA) and 318-342 (PAVG…PGAG). Composition is skewed to basic and acidic residues over residues 358–368 (PAKKKEIKTRG) and 386–398 (RRGD…DEHL). One can recognise a tr-type G domain in the interval 490–659 (PRAPVVTVMG…LLQADVMELK (170 aa)). The tract at residues 499 to 506 (GHVDHGKT) is G1. 499 to 506 (GHVDHGKT) is a binding site for GTP. Residues 524–528 (GITQH) are G2. The G3 stretch occupies residues 545–548 (DTPG). GTP-binding positions include 545–549 (DTPGH) and 599–602 (TKAD). The tract at residues 599–602 (TKAD) is G4. A G5 region spans residues 635 to 637 (SSK).

Belongs to the TRAFAC class translation factor GTPase superfamily. Classic translation factor GTPase family. IF-2 subfamily.

It localises to the cytoplasm. One of the essential components for the initiation of protein synthesis. Protects formylmethionyl-tRNA from spontaneous hydrolysis and promotes its binding to the 30S ribosomal subunits. Also involved in the hydrolysis of GTP during the formation of the 70S ribosomal complex. The sequence is that of Translation initiation factor IF-2 from Verminephrobacter eiseniae (strain EF01-2).